We begin with the raw amino-acid sequence, 72 residues long: Translation initiation factor IF-1 (72 aa).

The S1-like domain occupies 2 to 72 (AKEDCIEMQG…NKGRIIFRSR (71 aa)).

This sequence belongs to the IF-1 family. In terms of assembly, component of the 30S ribosomal translation pre-initiation complex which assembles on the 30S ribosome in the order IF-2 and IF-3, IF-1 and N-formylmethionyl-tRNA(fMet); mRNA recruitment can occur at any time during PIC assembly.

The protein localises to the cytoplasm. In terms of biological role, one of the essential components for the initiation of protein synthesis. Stabilizes the binding of IF-2 and IF-3 on the 30S subunit to which N-formylmethionyl-tRNA(fMet) subsequently binds. Helps modulate mRNA selection, yielding the 30S pre-initiation complex (PIC). Upon addition of the 50S ribosomal subunit IF-1, IF-2 and IF-3 are released leaving the mature 70S translation initiation complex. In Pasteurella multocida (strain Pm70), this protein is Translation initiation factor IF-1.